The sequence spans 270 residues: Imidazole glycerol phosphate synthase subunit HisF (270 aa).

Active-site residues include Asp-11 and Asp-130.

Belongs to the HisA/HisF family. As to quaternary structure, heterodimer of HisH and HisF.

The protein localises to the cytoplasm. It carries out the reaction 5-[(5-phospho-1-deoxy-D-ribulos-1-ylimino)methylamino]-1-(5-phospho-beta-D-ribosyl)imidazole-4-carboxamide + L-glutamine = D-erythro-1-(imidazol-4-yl)glycerol 3-phosphate + 5-amino-1-(5-phospho-beta-D-ribosyl)imidazole-4-carboxamide + L-glutamate + H(+). Its pathway is amino-acid biosynthesis; L-histidine biosynthesis; L-histidine from 5-phospho-alpha-D-ribose 1-diphosphate: step 5/9. Its function is as follows. IGPS catalyzes the conversion of PRFAR and glutamine to IGP, AICAR and glutamate. The HisF subunit catalyzes the cyclization activity that produces IGP and AICAR from PRFAR using the ammonia provided by the HisH subunit. This chain is Imidazole glycerol phosphate synthase subunit HisF, found in Chloroflexus aggregans (strain MD-66 / DSM 9485).